The chain runs to 298 residues: Fe(II)/2-oxoglutarate-dependent dioxygenase nvfF (298 aa).

3 residues coordinate Fe cation: His-137, Asp-139, and His-212.

It belongs to the PhyH family. In terms of assembly, homodimer. It depends on Fe cation as a cofactor.

The enzyme catalyses fumigatonoid C + 2-oxoglutarate + O2 = novofumigatonin + succinate + CO2 + H2O. The protein operates within secondary metabolite biosynthesis; terpenoid biosynthesis. In terms of biological role, fe(II)/2-oxoglutarate-dependent dioxygenase; part of the gene cluster that mediates the biosynthesis of novofumigatonin, a heavily oxygenated meroterpenoid containing a unique orthoester moiety. The first step of the pathway is the synthesis of 3,5-dimethylorsellinic acid (DMOA) by the polyketide synthase nvfA via condensation of one acetyl-CoA starter unit with 3 malonyl-CoA units and 2 methylations. DMOA is then converted to farnesyl-DMOA by the farnesyltransferase nvfB. Epoxydation by FAD-dependent monooxygenase nvfK, followed by a protonation-initiated cyclization catalyzed by the terpene cyclase nvfL leads to the production of asnavolin H. The short chain dehydrogenase nvfC then as a 3-OH dehydrogenase of asnovolin H to yield chemesin D. There are two branches to synthesize asnovolin A from chemesin D. In one branch, chemesin D undergoes Baeyer-Villiger oxidation by nvfH, methylation by nvfJ, and enoyl reduction by the nvfM D enoylreductase that reduces the double bond between C-5'and C-6', to form respectively asnovolin I, asnovolin K, and asnovolin A. In the other branch, the methylation precedes the Baeyer-Villiger oxidation and the enoyl reduction to yield asnovolin A via the asnovolin J intermediate. Asnovolin A is further converted to fumigatonoid A by the Fe(II)/2-oxoglutarate-dependent dioxygenase nvfI that catalyzes an endoperoxidation reaction. The alpha/beta hydrolase nvfD then acts as an epimerase that converts fumigatonoid A to its C-5' epimer, which then undergoes spontaneous or nvfD-catalyzed lactonization. The following step utilizes the ketoreductase nvfG to produce fumigatonoid B. The dioxygenase nvfE further converts fumigatonoid B into fumigatonoid C. Finally the Fe(II)/2-oxoglutarate-dependent dioxygenase nvfF catalyzes two rounds of oxidation to transform fumigatonoid C into the end product, novofumigatonin A. In Aspergillus novofumigatus (strain IBT 16806), this protein is Fe(II)/2-oxoglutarate-dependent dioxygenase nvfF.